The chain runs to 93 residues: Islet amyloid polypeptide (93 aa).

The first 23 residues, Met-1–Ala-23, serve as a signal peptide directing secretion. Positions Thr-24 to Asp-35 are excised as a propeptide. An intrachain disulfide couples Cys-39 to Cys-44. A disordered region spans residues Leu-64–Val-93. Tyr-74 bears the Tyrosine amide mark. A propeptide spanning residues Asn-78–Val-93 is cleaved from the precursor. The segment covering Pro-83–Val-93 has biased composition (basic and acidic residues).

The protein belongs to the calcitonin family. Can form homodimers. Interacts with IDE and INS. Interaction with INS inhibits homodimerization and fibril formation.

It is found in the secreted. In terms of biological role, amylin/IAPP is a glucoregulatory peptide hormone that plays an important role in the regulation of energy homeostasis. Selectively inhibits insulin-stimulated glucose utilization and glycogen deposition in muscle, while not affecting adipocyte glucose metabolism. IAPP function is mediated by the CALCR-RAMPs (AMYRs) receptor complexes. Amylin can also bind CALCR receptor in the absence of RAMPs, although it is more selective for AMYRs. This chain is Islet amyloid polypeptide, found in Mus musculus (Mouse).